A 146-amino-acid chain; its full sequence is UPF0178 protein CTC_02403 (146 aa).

It belongs to the UPF0178 family.

This is UPF0178 protein CTC_02403 from Clostridium tetani (strain Massachusetts / E88).